Reading from the N-terminus, the 187-residue chain is Oligoribonuclease (187 aa).

The 164-residue stretch at 7 to 170 (LCWLDMEMTG…DDILESIEEM (164 aa)) folds into the Exonuclease domain. The active site involves tyrosine 128.

The protein belongs to the oligoribonuclease family.

The protein resides in the cytoplasm. 3'-to-5' exoribonuclease specific for small oligoribonucleotides. In Neisseria meningitidis serogroup C / serotype 2a (strain ATCC 700532 / DSM 15464 / FAM18), this protein is Oligoribonuclease.